Consider the following 359-residue polypeptide: 24-methylenesterol C-methyltransferase 3 (359 aa).

The helical transmembrane segment at 4-24 threads the bilayer; sequence VALYCTAGLIAGAVYWFICVL.

The protein belongs to the class I-like SAM-binding methyltransferase superfamily. Erg6/SMT family.

Its subcellular location is the membrane. The enzyme catalyses 24-methylidenelophenol + S-adenosyl-L-methionine = (Z)-24-ethylidenelophenol + S-adenosyl-L-homocysteine + H(+). It participates in steroid biosynthesis; sterol biosynthesis. Functionally, catalyzes the methyl transfer from S-adenosyl-methionine to the methylene group of 24-methylene lophenol to form 24-ethylidene lophenol. The chain is 24-methylenesterol C-methyltransferase 3 (SMT3) from Arabidopsis thaliana (Mouse-ear cress).